A 219-amino-acid chain; its full sequence is N-(5'-phosphoribosyl)anthranilate isomerase (219 aa).

Belongs to the TrpF family.

It carries out the reaction N-(5-phospho-beta-D-ribosyl)anthranilate = 1-(2-carboxyphenylamino)-1-deoxy-D-ribulose 5-phosphate. Its pathway is amino-acid biosynthesis; L-tryptophan biosynthesis; L-tryptophan from chorismate: step 3/5. The polypeptide is N-(5'-phosphoribosyl)anthranilate isomerase (Mesorhizobium japonicum (strain LMG 29417 / CECT 9101 / MAFF 303099) (Mesorhizobium loti (strain MAFF 303099))).